Here is a 125-residue protein sequence, read N- to C-terminus: Glutamyl-tRNA(Gln) amidotransferase subunit C, mitochondrial (125 aa).

Belongs to the GatC family. Subunit of the heterotrimeric GatCAB amidotransferase (AdT) complex, composed of A, B and C subunits.

It localises to the mitochondrion. The enzyme catalyses L-glutamyl-tRNA(Gln) + L-glutamine + ATP + H2O = L-glutaminyl-tRNA(Gln) + L-glutamate + ADP + phosphate + H(+). Its function is as follows. Allows the formation of correctly charged Gln-tRNA(Gln) through the transamidation of misacylated Glu-tRNA(Gln) in the mitochondria. The reaction takes place in the presence of glutamine and ATP through an activated gamma-phospho-Glu-tRNA(Gln). This Drosophila mojavensis (Fruit fly) protein is Glutamyl-tRNA(Gln) amidotransferase subunit C, mitochondrial.